Here is a 1154-residue protein sequence, read N- to C-terminus: MACPWKFLFRAKFHQYGMKEEKDINNNVEKPPGATPSPSTQDDLKNHKHHNDSPQPLTETVQKLPESLDKLHATPLSRPQHVRIKNWGNGMTFQDTLHHKAKGDLACKSKSCLGAIMNPKSLTREPRDKPTPPDELLPQAIEFVNQYYSSFKEAKIEEHLARVEAVTKEIETTGTYQLTGDELIFATKQAWRNAPRCIGRIQWSNLQVFDARSCSTAKEMFEHICRHLRYASNNGNIRSAITVFPQRTDGKHDFRVWNAQLIRYAGYQMPDGTILGDPASVEFTQLCIDLGWKPKYGRFDVVPLVLQADGQDPEFFEIPPDLVLEVPMEHPKYEWFRELELKWYALPAVANMLLEVGGLEFPGCPFNGWYMGTEIGVRDFCDVQRYNILEEVGRRMGLETHKLASLWKDRAVIEINVAVLHSFQKQNVTIMDHHSAAESFMKYMQSEYRSRGGCPADWIWLVPPISGSITPVFHQEMLNYVLSPFYYYQVEAWKTHVWQDEKRRPQRRKIQLKVLVKAVLFASMLMRKTMASRVRVTILFATETGKSETLARDLGALFSCAFHPKVLCMDEYKLSHLEEEQLLLVVTSTFGNGDSPGNGEKLKKSLFMLKELTNKFRYAVFGLGSSMYPQFCAFAHDIDHKLSHLGASQLTPGGEGDELNGKEEAFRCWAVQTFKAACDTSDVRGKHCIQIPRLYTSNVTWDPHHYRLLQDSQPLDLNKALSKMHAKNVFTLRLKSQRNLQSPISNRTTLQVELSCEDSQELSYLPGEHLGVFPGNQLALVQGILERVVYSPAPLQPVHLETLSERGSYWVRNNRLPPCSLSQALTYFLDITTPPTHLLLRKLAQLAHQYAERHRLEILCHPSEYNKWKLTNSPTFLEVLEEFPSLRVSAGFLLSQLPILKPRYYSISSSRDCTPMEVHLTVAVLVYPTRDGQGPLHHGVCSTWLSNLKPQDPVPCFVRSAGNFKLPEDPSRPCILIGPGTGIAPFRSFWQQRLHDIKHKGLRGSRMTLVFGCRRPDEDHLYREEMLEMAQSGVLHEVHTAYSRLPGQPKVYVQDILRQQLASQVLRMLHEEQGHLYVCGDVRMARDVAHTLKHLVAAKLSLSEEQVEDYFFQLKSQKRYHEDIFGAVFPYEVKKDGAAKQPSDPRVPAAHGRS.

The disordered stretch occupies residues 22–58 (KDINNNVEKPPGATPSPSTQDDLKNHKHHNDSPQPLT). The short motif at 23–27 (DINNN) is the DINNN-motif; mediates interaction with SPSB1, SPSB2 and SPSB4 element. The Zn(2+) site is built by Cys107 and Cys112. Cys197 is a binding site for heme b. L-arginine is bound by residues Gln260, Trp369, Tyr370, and Glu374. (6R)-L-erythro-5,6,7,8-tetrahydrobiopterin is bound by residues Arg378, Ile459, Trp460, and Phe473. Tyr488 is a heme b binding site. Residues 512–532 (LKVLVKAVLFASMLMRKTMAS) form a calmodulin-binding region. Residues 536–674 (VTILFATETG…AFRCWAVQTF (139 aa)) form the Flavodoxin-like domain. Positions 542, 543, 544, 546, and 547 each coordinate FMN. At Tyr572 the chain carries Phosphotyrosine. FMN-binding residues include Ser588, Thr589, Ser625, Cys632, and Glu658. Positions 727–967 (KNVFTLRLKS…VRSAGNFKLP (241 aa)) constitute an FAD-binding FR-type domain. Position 747 (Arg747) interacts with NADP(+). His769, Arg903, Tyr905, Ser906, Thr921, Ala923, Tyr927, Val940, Cys941, and Ser942 together coordinate FAD. NADP(+) contacts are provided by Thr981, Arg1014, Ser1043, Arg1044, Lys1050, Tyr1052, Gln1054, and Asp1087.

It belongs to the NOS family. As to quaternary structure, homodimer. Interacts with NHERF1. Interacts with GAPDH; induced by oxidatively-modified low-densitity lipoprotein (LDL(ox)). Interacts with S100A8 and S100A9 to form the iNOS-S100A8/9 transnitrosylase complex. Interacts with SPSB1, SPSB2 and SPSB4. Interacts with ELOC and CUL5 in the presence of SPSB1 or SPSB2 or SPSB4. Forms a complex with ASL, ASS1 and HSP90AA1; the complex regulates cell-autonomous L-arginine synthesis and citrulline recycling while channeling extracellular L-arginine to nitric oxide synthesis pathway. Heme b serves as cofactor. It depends on FAD as a cofactor. The cofactor is FMN. (6R)-L-erythro-5,6,7,8-tetrahydrobiopterin is required as a cofactor. In terms of processing, polyubiquitinated; mediated by SPSB1, SPSB2 and SPSB4, leading to proteasomal degradation.

It is found in the cytoplasm. The protein localises to the cytosol. The catalysed reaction is 2 L-arginine + 3 NADPH + 4 O2 + H(+) = 2 L-citrulline + 2 nitric oxide + 3 NADP(+) + 4 H2O. Its activity is regulated as follows. Regulated by calcium/calmodulin. In terms of biological role, produces nitric oxide (NO) which is a messenger molecule with diverse functions throughout the body. In macrophages, NO mediates tumoricidal and bactericidal actions. Also has nitrosylase activity and mediates cysteine S-nitrosylation of cytoplasmic target proteins such PTGS2/COX2. As component of the iNOS-S100A8/9 transnitrosylase complex involved in the selective inflammatory stimulus-dependent S-nitrosylation of GAPDH implicated in regulation of the GAIT complex activity and probably multiple targets including ANXA5, EZR, MSN and VIM. Involved in inflammation, enhances the synthesis of pro-inflammatory mediators such as IL6 and IL8. The protein is Nitric oxide synthase, inducible (NOS2) of Canis lupus familiaris (Dog).